The following is a 224-amino-acid chain: F420-dependent NADP reductase (224 aa).

Residues 9–12 (TGDQ), 31–32 (SR), lysine 36, valine 74, valine 100, and alanine 145 contribute to the NADP(+) site.

Belongs to the F420-dependent NADP reductase family. In terms of assembly, homotetramer.

The catalysed reaction is reduced coenzyme F420-(gamma-L-Glu)(n) + NADP(+) = oxidized coenzyme F420-(gamma-L-Glu)(n) + NADPH + 2 H(+). In terms of biological role, catalyzes the reduction of NADP(+) with F420H(2) via hydride transfer, and the reverse reaction, i.e. the reduction of F420 with NADPH. Probably functions in the regeneration of NADPH required in biosynthetic reactions. The chain is F420-dependent NADP reductase from Methanothermobacter marburgensis (strain ATCC BAA-927 / DSM 2133 / JCM 14651 / NBRC 100331 / OCM 82 / Marburg) (Methanobacterium thermoautotrophicum).